The following is a 319-amino-acid chain: Acetyl-coenzyme A carboxylase carboxyl transferase subunit alpha (319 aa).

Residues 39–293 enclose the CoA carboxyltransferase C-terminal domain; the sequence is RLQKKSNDLT…KAVLEKQLHE (255 aa).

Belongs to the AccA family. Acetyl-CoA carboxylase is a heterohexamer composed of biotin carboxyl carrier protein (AccB), biotin carboxylase (AccC) and two subunits each of ACCase subunit alpha (AccA) and ACCase subunit beta (AccD).

It is found in the cytoplasm. The catalysed reaction is N(6)-carboxybiotinyl-L-lysyl-[protein] + acetyl-CoA = N(6)-biotinyl-L-lysyl-[protein] + malonyl-CoA. It participates in lipid metabolism; malonyl-CoA biosynthesis; malonyl-CoA from acetyl-CoA: step 1/1. Functionally, component of the acetyl coenzyme A carboxylase (ACC) complex. First, biotin carboxylase catalyzes the carboxylation of biotin on its carrier protein (BCCP) and then the CO(2) group is transferred by the carboxyltransferase to acetyl-CoA to form malonyl-CoA. The sequence is that of Acetyl-coenzyme A carboxylase carboxyl transferase subunit alpha from Neisseria meningitidis serogroup C / serotype 2a (strain ATCC 700532 / DSM 15464 / FAM18).